Reading from the N-terminus, the 1568-residue chain is MEVSRRKAPPRPPRPAAPLPLLAYLLALAAPGRGADEPVWRSEQAIGAIAASQEDGVFVASGSCLDQLDYSLEHSLSRLYRDQAGNCTEPVSLAPPARPRPGSSFSKLLLPYREGAAGLGGLLLTGWTFDRGACEVRPLGNLSRNSLRNGTEVVSCHPQGSTAGVVYRAGRNNRWYLAVAATYVLPEPETASRCNPAASDHDTAIALKDTEGRSLATQELGRLKLCEGAGSLHFVDAFLWNGSIYFPYYPYNYTSGAATGWPSMARIAQSTEVLFQGQASLDCGHGHPDGRRLLLSSSLVEALDVWAGVFSAAAGEGQERRSPTTTALCLFRMSEIQARAKRVSWDFKTAESHCKEGDQPERVQPIASSTLIHSDLTSVYGTVVMNRTVLFLGTGDGQLLKVILGENLTSNCPEVIYEIKEETPVFYKLVPDPVKNIYIYLTAGKEVRRIRVANCNKHKSCSECLTATDPHCGWCHSLQRCTFQGDCVHSENLENWLDISSGAKKCPKIQIIRSSKEKTTVTMVGSFSPRHSKCMVKNVDSSRELCQNKSQPNRTCTCSIPTRATYKDVSVVNVMFSFGSWNLSDRFNFTNCSSLKECPACVETGCAWCKSARRCIHPFTACDPSDYERNQEQCPVAVEKTSGGGRPKENKGNRTNQALQVFYIKSIEPQKVSTLGKSNVIVTGANFTRASNITMILKGTSTCDKDVIQVSHVLNDTHMKFSLPSSRKEMKDVCIQFDGGNCSSVGSLSYIALPHCSLIFPATTWISGGQNITMMGRNFDVIDNLIISHELKGNINVSEYCVATYCGFLAPSLKSSKVRTNVTVKLRVQDTYLDCGTLQYREDPRFTGYRVESEVDTELEVKIQKENDNFNISKKDIEITLFHGENGQLNCSFENITRNQDLTTILCKIKGIKTASTIANSSKKVRVKLGNLELYVEQESVPSTWYFLIVLPVLLVIVIFAAVGVTRHKSKELSRKQSQQLELLESELRKEIRDGFAELQMDKLDVVDSFGTVPFLDYKHFALRTFFPESGGFTHIFTEDMHNRDANDKNESLTALDALICNKSFLVTVIHTLEKQKNFSVKDRCLFASFLTIALQTKLVYLTSILEVLTRDLMEQCSNMQPKLMLRRTESVVEKLLTNWMSVCLSGFLRETVGEPFYLLVTTLNQKINKGPVDVITCKALYTLNEDWLLWQVPEFSTVALNVVFEKIPENESADVCRNISVNVLDCDTIGQAKEKIFQAFLSKNGSPYGLQLNEIGLELQMGTRQKELLDIDSSSVILEDGITKLNTIGHYEISNGSTIKVFKKIANFTSDVEYSDDHCHLILPDSEAFQDVQGKRHRGKHKFKVKEMYLTKLLSTKVAIHSVLEKLFRSIWSLPNSRAPFAIKYFFDFLDAQAENKKITDPDVVHIWKTNSLPLRFWVNILKNPQFVFDIKKTPHIDGCLSVIAQAFMDAFSLTEQQLGKEAPTNKLLYAKDIPTYKEEVKSYYKAIRDLPPLSSSEMEEFLTQESKKHENEFNEEVALTEIYKYIVKYFDEILNKLERERGLEEAQKQLLHVKVLFDEKKKCKWM.

Residues 1 to 34 (MEVSRRKAPPRPPRPAAPLPLLAYLLALAAPGRG) form the signal peptide. The Sema domain maps to 35-452 (ADEPVWRSEQ…AGKEVRRIRV (418 aa)). Residues 35–944 (ADEPVWRSEQ…YVEQESVPST (910 aa)) are Extracellular-facing. Cysteines 64 and 87 form a disulfide. N-linked (GlcNAc...) asparagine glycans are attached at residues N86, N141, and N149. 3 disulfides stabilise this stretch: C156–C194, C226–C354, and C283–C329. N241 and N252 each carry an N-linked (GlcNAc...) asparagine glycan. N-linked (GlcNAc...) asparagine glycosylation is found at N386 and N407. 4 disulfide bridges follow: C455-C472, C461-C506, C464-C481, and C475-C487. 9 N-linked (GlcNAc...) asparagine glycosylation sites follow: N548, N582, N653, N692, N771, N796, N821, N871, and N890. Residues 945-965 (WYFLIVLPVLLVIVIFAAVGV) form a helical membrane-spanning segment. Residues 966 to 1568 (TRHKSKELSR…FDEKKKCKWM (603 aa)) lie on the Cytoplasmic side of the membrane. A Phosphoserine modification is found at S978.

It belongs to the plexin family. Monomer. Homodimer. Interacts with SEMA7A. In terms of processing, N-glycosylated. As to expression, detected in heart, brain, lung, spleen and placenta.

Its subcellular location is the membrane. Receptor for SEMA7A, for smallpox semaphorin A39R, vaccinia virus semaphorin A39R and for herpesvirus Sema protein. Binding of semaphorins triggers cellular responses leading to the rearrangement of the cytoskeleton and to secretion of IL6 and IL8. This chain is Plexin-C1 (PLXNC1), found in Homo sapiens (Human).